Consider the following 309-residue polypeptide: 2-phospho-L-lactate transferase (309 aa).

7,8-didemethyl-8-hydroxy-5-deazariboflavin contacts are provided by Asp50 and Lys89.

It belongs to the CofD family. Homodimer. Mg(2+) serves as cofactor.

It carries out the reaction (2S)-lactyl-2-diphospho-5'-guanosine + 7,8-didemethyl-8-hydroxy-5-deazariboflavin = oxidized coenzyme F420-0 + GMP + H(+). It participates in cofactor biosynthesis; coenzyme F420 biosynthesis. Its function is as follows. Catalyzes the transfer of the 2-phospholactate moiety from (2S)-lactyl-2-diphospho-5'-guanosine to 7,8-didemethyl-8-hydroxy-5-deazariboflavin (FO) with the formation of oxidized coenzyme F420-0 and GMP. The protein is 2-phospho-L-lactate transferase of Methanococcus maripaludis (strain C5 / ATCC BAA-1333).